Consider the following 275-residue polypeptide: uncharacterized protein (275 aa).

Transmembrane regions (helical) follow at residues 15-35 (LFLP…FLGS), 39-59 (AIMI…FGLF), and 70-90 (ILYL…VVYL). The tract at residues 140 to 191 (SSKTDMDSQVAEAPQTEEGEPSVNQVPQEAGASHRVGPYQDQGLATDRNGNP) is disordered.

Its subcellular location is the mitochondrion membrane. This is an uncharacterized protein from Arabidopsis thaliana (Mouse-ear cress).